Here is a 155-residue protein sequence, read N- to C-terminus: Transcription antitermination protein NusB (155 aa).

The protein belongs to the NusB family.

Involved in transcription antitermination. Required for transcription of ribosomal RNA (rRNA) genes. Binds specifically to the boxA antiterminator sequence of the ribosomal RNA (rrn) operons. The chain is Transcription antitermination protein NusB from Vibrio campbellii (strain ATCC BAA-1116).